The sequence spans 318 residues: Thymidylate synthase (318 aa).

DUMP-binding positions include Arg25 and 180–181; that span reads RR. Residue Cys200 is the Nucleophile of the active site. Residues 220 to 223, Asn231, and 261 to 263 each bind dUMP; these read RSGD and HIY. Asp223 provides a ligand contact to (6R)-5,10-methylene-5,6,7,8-tetrahydrofolate. Ala317 provides a ligand contact to (6R)-5,10-methylene-5,6,7,8-tetrahydrofolate.

Belongs to the thymidylate synthase family. Bacterial-type ThyA subfamily. In terms of assembly, homodimer.

It localises to the cytoplasm. It catalyses the reaction dUMP + (6R)-5,10-methylene-5,6,7,8-tetrahydrofolate = 7,8-dihydrofolate + dTMP. Its pathway is pyrimidine metabolism; dTTP biosynthesis. In terms of biological role, catalyzes the reductive methylation of 2'-deoxyuridine-5'-monophosphate (dUMP) to 2'-deoxythymidine-5'-monophosphate (dTMP) while utilizing 5,10-methylenetetrahydrofolate (mTHF) as the methyl donor and reductant in the reaction, yielding dihydrofolate (DHF) as a by-product. This enzymatic reaction provides an intracellular de novo source of dTMP, an essential precursor for DNA biosynthesis. This is Thymidylate synthase from Bacillus cytotoxicus (strain DSM 22905 / CIP 110041 / 391-98 / NVH 391-98).